The primary structure comprises 232 residues: Ribonuclease P protein component 3 (232 aa).

This sequence belongs to the eukaryotic/archaeal RNase P protein component 3 family. In terms of assembly, consists of a catalytic RNA component and at least 5 protein subunits.

It is found in the cytoplasm. The catalysed reaction is Endonucleolytic cleavage of RNA, removing 5'-extranucleotides from tRNA precursor.. In terms of biological role, part of ribonuclease P, a protein complex that generates mature tRNA molecules by cleaving their 5'-ends. The polypeptide is Ribonuclease P protein component 3 (Methanococcus maripaludis (strain DSM 14266 / JCM 13030 / NBRC 101832 / S2 / LL)).